The sequence spans 410 residues: BTB/POZ and MATH domain-containing protein 5 (410 aa).

A disordered region spans residues 1 to 24 (MSESVIQGSNPDRVLSPTSSKSVT). The 135-residue stretch at 28-162 (NGSHQFVIQG…DDCLIINCTV (135 aa)) folds into the MATH domain. A BTB domain is found at 198–264 (SDITFNIAGE…MYKDSLPEDV (67 aa)).

It belongs to the Tdpoz family. In terms of assembly, heterodimer with BPM1 and BPM3. Interacts with RAP2-4. Binds to MYB56 at the promoter of FLOWERING LOCUS T (FT). Ubiquitous.

It is found in the nucleus. The protein resides in the cytoplasm. Its pathway is protein modification; protein ubiquitination. In terms of biological role, may act as a substrate-specific adapter of an E3 ubiquitin-protein ligase complex (CUL3-RBX1-BTB) which mediates the ubiquitination and subsequent proteasomal degradation of target proteins. The protein is BTB/POZ and MATH domain-containing protein 5 (BPM5) of Arabidopsis thaliana (Mouse-ear cress).